The chain runs to 423 residues: Histidine--tRNA ligase (423 aa).

Belongs to the class-II aminoacyl-tRNA synthetase family. Homodimer.

The protein resides in the cytoplasm. It catalyses the reaction tRNA(His) + L-histidine + ATP = L-histidyl-tRNA(His) + AMP + diphosphate + H(+). The chain is Histidine--tRNA ligase from Prochlorococcus marinus (strain MIT 9211).